A 286-amino-acid chain; its full sequence is Translocon-associated protein subunit alpha (286 aa).

The first 21 residues, Met-1–Leu-21, serve as a signal peptide directing secretion. Residues Arg-22–Thr-207 are Lumenal-facing. A disordered region spans residues Ser-28–Ala-83. The segment covering Asp-34 to Gly-75 has biased composition (acidic residues). Asn-136 and Asn-191 each carry an N-linked (GlcNAc...) asparagine glycan. Residues Ile-208–Leu-228 form a helical membrane-spanning segment. Over Leu-229–Glu-286 the chain is Cytoplasmic. Position 247 is a phosphoserine (Ser-247). Thr-260 carries the post-translational modification Phosphothreonine. The tract at residues Ile-264–Glu-286 is disordered. Ser-268 is modified (phosphoserine). Positions Ser-268–Lys-279 are enriched in basic residues.

It belongs to the TRAP-alpha family. As to quaternary structure, heterotetramer of TRAP-alpha, TRAP-beta, TRAP-delta and TRAP-gamma. Interacts with palmitoylated calnexin (CALX), the interaction is required for efficient folding of glycosylated proteins. Phosphorylated in its cytoplasmic tail.

The protein localises to the endoplasmic reticulum membrane. Its function is as follows. TRAP proteins are part of a complex whose function is to bind calcium to the ER membrane and thereby regulate the retention of ER resident proteins. May be involved in the recycling of the translocation apparatus after completion of the translocation process or may function as a membrane-bound chaperone facilitating folding of translocated proteins. This chain is Translocon-associated protein subunit alpha (SSR1), found in Oryctolagus cuniculus (Rabbit).